We begin with the raw amino-acid sequence, 432 residues long: Glutamyl-tRNA reductase (432 aa).

Residues 49–52 (TCNR), Ser109, 114–116 (EGQ), and Gln120 contribute to the substrate site. Cys50 acts as the Nucleophile in catalysis. 189-194 (GAGKMS) contacts NADP(+).

This sequence belongs to the glutamyl-tRNA reductase family. Homodimer.

It carries out the reaction (S)-4-amino-5-oxopentanoate + tRNA(Glu) + NADP(+) = L-glutamyl-tRNA(Glu) + NADPH + H(+). The protein operates within porphyrin-containing compound metabolism; protoporphyrin-IX biosynthesis; 5-aminolevulinate from L-glutamyl-tRNA(Glu): step 1/2. It participates in porphyrin-containing compound metabolism; chlorophyll biosynthesis. Its function is as follows. Catalyzes the NADPH-dependent reduction of glutamyl-tRNA(Glu) to glutamate 1-semialdehyde (GSA). The chain is Glutamyl-tRNA reductase from Cyanothece sp. (strain PCC 7425 / ATCC 29141).